Consider the following 79-residue polypeptide: U-actitoxin-Bgr3d (79 aa).

A signal peptide spans M1 to A21. Positions Q22 to Q38 are excised as a propeptide. 3 disulfide bridges follow: C44-C76, C46-C69, and C59-C77.

Belongs to the sea anemone type 3 (BDS) potassium channel toxin family.

Its subcellular location is the secreted. The protein resides in the nematocyst. Functionally, potently and selectively inhibits voltage-gated potassium channels Kv11/KCNH/ERG. Acts as a gating-modifier toxin that shifts the voltage-dependence of ERG activation in the positive direction and suppresses its current amplitudes elicited by strong depolarizing pulses that maximally activate the channels. This Bunodosoma granuliferum (Red warty sea anemone) protein is U-actitoxin-Bgr3d.